We begin with the raw amino-acid sequence, 101 residues long: Protamine-3 (101 aa).

Residues 1–101 (MGSRCAKLST…PSPEPKQTHS (101 aa)) are disordered. Positions 45 to 67 (EGEEEEEDEEEEEEEEEEEEEEQ) are enriched in acidic residues. S93 is subject to Phosphoserine.

It belongs to the protamine P3 family. As to expression, testis.

The protein localises to the nucleus. Its subcellular location is the chromosome. Functionally, protamines substitute for histones in the chromatin of sperm during the haploid phase of spermatogenesis. They compact sperm DNA into a highly condensed, stable and inactive complex. This is Protamine-3 (Prm3) from Mus musculus (Mouse).